We begin with the raw amino-acid sequence, 235 residues long: Protein GrpE (235 aa).

Positions 1 to 18 (MTDGNQKPDGNSGEQVTV) are enriched in polar residues. Disordered regions lie at residues 1 to 50 (MTDG…DAAH) and 198 to 235 (ESVD…PSGS). Residues 19–35 (TDKRRIDPETGEVRHVP) show a composition bias toward basic and acidic residues. Residues 215–235 (ADQGNSADTSGEQAESEPSGS) are compositionally biased toward polar residues.

It belongs to the GrpE family. Homodimer.

Its subcellular location is the cytoplasm. Its function is as follows. Participates actively in the response to hyperosmotic and heat shock by preventing the aggregation of stress-denatured proteins, in association with DnaK and GrpE. It is the nucleotide exchange factor for DnaK and may function as a thermosensor. Unfolded proteins bind initially to DnaJ; upon interaction with the DnaJ-bound protein, DnaK hydrolyzes its bound ATP, resulting in the formation of a stable complex. GrpE releases ADP from DnaK; ATP binding to DnaK triggers the release of the substrate protein, thus completing the reaction cycle. Several rounds of ATP-dependent interactions between DnaJ, DnaK and GrpE are required for fully efficient folding. This Mycobacterium tuberculosis (strain ATCC 25177 / H37Ra) protein is Protein GrpE.